Reading from the N-terminus, the 369-residue chain is 4-hydroxy-3-methylbut-2-en-1-yl diphosphate synthase (flavodoxin) (369 aa).

[4Fe-4S] cluster is bound by residues Cys-270, Cys-273, Cys-305, and Glu-312.

This sequence belongs to the IspG family. [4Fe-4S] cluster is required as a cofactor.

It catalyses the reaction (2E)-4-hydroxy-3-methylbut-2-enyl diphosphate + oxidized [flavodoxin] + H2O + 2 H(+) = 2-C-methyl-D-erythritol 2,4-cyclic diphosphate + reduced [flavodoxin]. Its pathway is isoprenoid biosynthesis; isopentenyl diphosphate biosynthesis via DXP pathway; isopentenyl diphosphate from 1-deoxy-D-xylulose 5-phosphate: step 5/6. Functionally, converts 2C-methyl-D-erythritol 2,4-cyclodiphosphate (ME-2,4cPP) into 1-hydroxy-2-methyl-2-(E)-butenyl 4-diphosphate. This Pseudomonas putida (strain W619) protein is 4-hydroxy-3-methylbut-2-en-1-yl diphosphate synthase (flavodoxin).